Here is a 223-residue protein sequence, read N- to C-terminus: Proteinase inhibitor type-2 TR8 (223 aa).

A signal peptide spans M1–A24. A run of 3 repeats spans residues A24 to S81, K88 to S145, and E152 to S209. Intrachain disulfides connect C27–C120, C31–C116, C40–C126, C52–C95, C55–C73, C56–C91, C62–C104, and C119–C137.

Belongs to the protease inhibitor I20 (potato type II proteinase inhibitor) family.

The protein is Proteinase inhibitor type-2 TR8 (ARPI) of Solanum lycopersicum (Tomato).